A 61-amino-acid polypeptide reads, in one-letter code: Chi-conotoxin MrIA (61 aa).

An N-terminal signal peptide occupies residues 1 to 19; it reads MRCLPVLIILLLLTASAPG. The propeptide occupies 20 to 48; that stretch reads VVVLPKTEDDVPMSSVYGNGKSILRGILR. 2 disulfides stabilise this stretch: cysteine 52–cysteine 61 and cysteine 53–cysteine 58. Proline 60 is modified (4-hydroxyproline).

It belongs to the conotoxin T superfamily. Expressed by the venom duct.

The protein resides in the secreted. Chi-conotoxins inhibit the neuronal noradrenaline transporter (NET/SLC6A2). Activity has been described on both human (inhibition of norepinephrine uptake is IC(50)=1.26 uM) and rat (pIC(50)=6.21 corresponding IC(50)=0.16 uM) transporters. Acts as a reversible non-competitive inhibitor. This Conus marmoreus (Marble cone) protein is Chi-conotoxin MrIA.